Here is a 249-residue protein sequence, read N- to C-terminus: Glutathione S-transferase tcpG (249 aa).

The GST N-terminal domain occupies 20–109; it reads LYVRKAIPAP…YLCDKHDKDG (90 aa). One can recognise a GST C-terminal domain in the interval 115 to 249; that stretch reads NATERAQVTS…TEEEIELHGR (135 aa).

The protein belongs to the GST superfamily.

The enzyme catalyses RX + glutathione = an S-substituted glutathione + a halide anion + H(+). Its pathway is secondary metabolite biosynthesis. Its function is as follows. Glutathione S-transferase; part of the gene cluster that mediates the biosynthesis of an unusual class of epipolythiodioxopiperazines (ETPs) lacking the reactive thiol group important for toxicity. Firstly, L-tyrosine is prenylated by tcpD, before undergoing condensation with L-glycine in a reaction catalyzed by the NRPS tcpP leading to the diketopiperazine (DKP) backbone. Afterwards the alpha-carbon of tyrosine is oxidized by the cytochrome P450 tcpC to form a hydroxyl group. However, in contrast other ETP biosynthesis pathways studied so far, tcpC is not able to bishydroxylate the DKP at both alpha-carbon positions, but hydroxylates the alpha-carbon of the tyrosine part and the nitrogen of the glycine part. The next steps involve an alpha,beta-elimination reaction catalyzed by tcpI, a methylation by the methyltransferase tcpN the action of the four enzyme cascade tcpG/K/J/I. Due to a dysfunctional cytochrome P450 monooxygenase tcpC, the pathway leads to the biosynthesis of probable non-toxic metabolites lacking the reactive thiol group. This is Glutathione S-transferase tcpG from Claviceps purpurea (strain 20.1) (Ergot fungus).